Here is a 729-residue protein sequence, read N- to C-terminus: Replication restart protein PriA (729 aa).

Residues 209–376 (QTALGRFRSF…QSGAYRLLQL (168 aa)) enclose the Helicase ATP-binding domain. Residue 222-229 (GITGSGKT) participates in ATP binding. The DEAH box motif lies at 319–322 (DEEH). Cys436, Cys439, Cys445, Cys448, Cys463, Cys466, Cys476, and Cys479 together coordinate Zn(2+). Residues 471–623 (PIPFKCPDCG…YAVFAENELN (153 aa)) form the Helicase C-terminal domain.

The protein belongs to the helicase family. PriA subfamily. Interacts with PriB with high affinity in the absence of DNA. Component of the replication restart primosome. Zn(2+) is required as a cofactor.

It catalyses the reaction Couples ATP hydrolysis with the unwinding of duplex DNA by translocating in the 3'-5' direction.. The enzyme catalyses ATP + H2O = ADP + phosphate + H(+). With respect to regulation, helicase and ATPase activities on forked DNA are stimulated by PriB; E.coli PriB does not stimulate this helicase. PriA:PriB complex-catalyzed duplex DNA winding is inhibited by CGS 15943 (CHEBI:131351). CGS 15943 decreases ATP hydrolysis and decreases PriA's affinity for DNA. Functionally, initiates the restart of stalled replication forks, which reloads the replicative helicase on sites other than the origin of replication. Recognizes and binds to abandoned replication forks and remodels them to uncover a helicase loading site. Promotes assembly of the primosome at these replication forks. In terms of biological role, DNA helicase with greatest unwinding activity on forked DNA substrates with relatively short duplex lagging strand arms. A DNA-dependent ATPase. Required for DNA transformation and DNA repair. Binds single-stranded (ss)DNA and replication fork-like DNA but not double-stranded (ds)DNA. In Neisseria gonorrhoeae (strain ATCC 700825 / FA 1090), this protein is Replication restart protein PriA.